The following is a 478-amino-acid chain: GMP reductase (478 aa).

2 CBS domains span residues V95 to I152 and A153 to A211. Residues D245–A247 and G295–G297 contribute to the NADP(+) site. The active-site Thioimidate intermediate is the C302.

Belongs to the IMPDH/GMPR family. GuaB1 subfamily. As to quaternary structure, homooctamer composed of two tetramers. The oligomerization state is regulated by ligands and pH. It depends on a monovalent cation as a cofactor.

The catalysed reaction is IMP + NH4(+) + NADP(+) = GMP + NADPH + 2 H(+). It participates in purine metabolism; IMP biosynthesis via salvage pathway. With respect to regulation, activity is allosterically regulated by the ATP/GTP ratio in a pH-dependent manner. At pH 7.8, GTP has only a minor positive effect and ATP only a minor negative effect on the activity, however, at lower pH values, the effects of ATP and GTP increase. ATP-dependent inhibition can be restored by increasing GTP concentration. IMP and XMP are competitive inhibitors. In terms of biological role, involved in the purine-salvage pathway. Catalyzes the NADPH-dependent conversion of GMP to IMP. Is not essential for viability, but may contribute to the regulation of the purine nucleotide pool by recycling GMP to IMP. This chain is GMP reductase, found in Mycolicibacterium smegmatis (strain ATCC 700084 / mc(2)155) (Mycobacterium smegmatis).